The following is a 209-amino-acid chain: Octanoyltransferase (209 aa).

The 180-residue stretch at 30–209 (DHKPEIIYLV…IQTEFNKIFK (180 aa)) folds into the BPL/LPL catalytic domain. Substrate is bound by residues 69-76 (RGGKFTFH), 143-145 (AIG), and 156-158 (GVA). Cys174 (acyl-thioester intermediate) is an active-site residue.

The protein belongs to the LipB family.

Its subcellular location is the cytoplasm. The catalysed reaction is octanoyl-[ACP] + L-lysyl-[protein] = N(6)-octanoyl-L-lysyl-[protein] + holo-[ACP] + H(+). It participates in protein modification; protein lipoylation via endogenous pathway; protein N(6)-(lipoyl)lysine from octanoyl-[acyl-carrier-protein]: step 1/2. In terms of biological role, catalyzes the transfer of endogenously produced octanoic acid from octanoyl-acyl-carrier-protein onto the lipoyl domains of lipoate-dependent enzymes. Lipoyl-ACP can also act as a substrate although octanoyl-ACP is likely to be the physiological substrate. This Rickettsia conorii (strain ATCC VR-613 / Malish 7) protein is Octanoyltransferase.